We begin with the raw amino-acid sequence, 129 residues long: HTH-type transcriptional regulator DdrOP3 (129 aa).

An HTH cro/C1-type domain is found at 7 to 61 (LRELRQERGLRLKDIAGAAQISVPYLSDLERGRTNPSLETLQSLASTYGITVHDL). The H-T-H motif DNA-binding region spans 18–37 (LKDIAGAAQISVPYLSDLER).

In terms of processing, cleaved between Leu-106 and Arg-107 by the IrrE metalloprotease after exposure to radiation. Cleavage inactivates DdrOP3, leading to derepression of the target genes.

Its function is as follows. Repressor specific for genes preceded by a radiation/desiccation response motif (RDRM) site, which is present upstream of several radiation-induced genes. The protein is HTH-type transcriptional regulator DdrOP3 of Deinococcus deserti (strain DSM 17065 / CIP 109153 / LMG 22923 / VCD115).